A 161-amino-acid chain; its full sequence is Arachidonate 5-lipoxygenase-activating protein (161 aa).

Over 1–8 the chain is Lumenal; it reads MDQETVGN. A helical membrane pass occupies residues 9–30; that stretch reads VVLLAIVTLISVVQNGFFAHKV. Over 31 to 52 the chain is Cytoplasmic; that stretch reads EHESRTQNGRSFQRTGTLAFER. Residues 53 to 77 traverse the membrane as a helical segment; it reads VYTANQNCVDAYPTFLAVLWSAGLL. Residues 78–80 lie on the Lumenal side of the membrane; it reads CSQ. The chain crosses the membrane as a helical span at residues 81–102; that stretch reads VPAAFAGLMYLLVRQKYFVGYL. The Cytoplasmic segment spans residues 103 to 107; sequence GERTQ. The stretch at 108 to 115 is an intramembrane region; sequence STPGYIFG. Residues 116-128 form a helical membrane-spanning segment; it reads KRIILFLFLMSVA. The Lumenal segment spans residues 129–161; that stretch reads GIFNYYLIFFFGSDFENYIKTVTTTISPLLLIP.

This sequence belongs to the MAPEG family. In terms of assembly, homotrimer. Interacts with LTC4S and ALOX5.

Its subcellular location is the nucleus membrane. The protein resides in the endoplasmic reticulum membrane. Required for leukotriene biosynthesis by ALOX5 (5-lipoxygenase). Anchors ALOX5 to the membrane. Binds arachidonic acid, and could play an essential role in the transfer of arachidonic acid to ALOX5. Binds to MK-886, a compound that blocks the biosynthesis of leukotrienes. This chain is Arachidonate 5-lipoxygenase-activating protein (ALOX5AP), found in Macaca fascicularis (Crab-eating macaque).